A 337-amino-acid chain; its full sequence is Ribonucleoside-diphosphate reductase small subunit (337 aa).

Residues 1–22 form a disordered region; it reads MDPAVSPASTDPLDTHASGAGA. Residues Asp-91, Glu-121, and His-124 each contribute to the Fe cation site. The active site involves Tyr-128. A helical membrane pass occupies residues 177-197; that stretch reads FILMILIEGVFFAASFAAIAY. Fe cation is bound by residues Glu-184, Glu-218, and His-221.

It belongs to the ribonucleoside diphosphate reductase small chain family. Heterotetramer composed of a homodimer of the large subunit (R1) and a homodimer of the small subunit (R2). Larger multisubunit protein complex are also active, composed of (R1)n(R2)n. The cofactor is Fe cation.

The protein localises to the host membrane. The enzyme catalyses a 2'-deoxyribonucleoside 5'-diphosphate + [thioredoxin]-disulfide + H2O = a ribonucleoside 5'-diphosphate + [thioredoxin]-dithiol. In terms of biological role, ribonucleoside-diphosphate reductase holoenzyme provides the precursors necessary for viral DNA synthesis. Allows virus growth in non-dividing cells, as well as reactivation from latency in infected hosts. Catalyzes the biosynthesis of deoxyribonucleotides from the corresponding ribonucleotides. This is Ribonucleoside-diphosphate reductase small subunit from Human herpesvirus 2 (strain 333) (HHV-2).